We begin with the raw amino-acid sequence, 41 residues long: Photosystem II reaction center protein L (41 aa).

The helical transmembrane segment at 20 to 40 (SLYLGLLLVFVVGLLFSSYFL) threads the bilayer.

The protein belongs to the PsbL family. PSII is composed of 1 copy each of membrane proteins PsbA, PsbB, PsbC, PsbD, PsbE, PsbF, PsbH, PsbI, PsbJ, PsbK, PsbL, PsbM, PsbT, PsbX, PsbY, PsbZ, Psb30/Ycf12, peripheral proteins PsbO, CyanoQ (PsbQ), PsbU, PsbV and a large number of cofactors. It forms dimeric complexes.

It is found in the cellular thylakoid membrane. One of the components of the core complex of photosystem II (PSII). PSII is a light-driven water:plastoquinone oxidoreductase that uses light energy to abstract electrons from H(2)O, generating O(2) and a proton gradient subsequently used for ATP formation. It consists of a core antenna complex that captures photons, and an electron transfer chain that converts photonic excitation into a charge separation. This subunit is found at the monomer-monomer interface and is required for correct PSII assembly and/or dimerization. The polypeptide is Photosystem II reaction center protein L (Synechococcus sp. (strain JA-2-3B'a(2-13)) (Cyanobacteria bacterium Yellowstone B-Prime)).